Reading from the N-terminus, the 325-residue chain is Small ribosomal subunit protein uS2 (325 aa).

A compositionally biased stretch (basic and acidic residues) spans 212-226; that stretch reads KEEQAKAEAERERLA. A disordered region spans residues 212 to 325; that stretch reads KEEQAKAEAE…TEPKASTGNW (114 aa). Low complexity-rich tracts occupy residues 234–247 and 261–289; these read QPAAPQQDPDQWAD and PVTTAPVPTGGAPPVASTTATPATNTGSG. The span at 290–300 shows a compositional bias: polar residues; that stretch reads FNQDDWSVPTT.

The protein belongs to the universal ribosomal protein uS2 family. Component of the small ribosomal subunit. Mature ribosomes consist of a small (40S) and a large (60S) subunit. The 40S subunit contains about 33 different proteins and 1 molecule of RNA (18S). The 60S subunit contains about 49 different proteins and 3 molecules of RNA (28S, 5.8S and 5S). Interacts with ribosomal protein S21.

It is found in the cytoplasm. Its function is as follows. Required for the assembly and/or stability of the 40S ribosomal subunit. Required for the processing of the 20S rRNA-precursor to mature 18S rRNA in a late step of the maturation of 40S ribosomal subunits. In Suberites domuncula (Sponge), this protein is Small ribosomal subunit protein uS2.